A 474-amino-acid chain; its full sequence is Glutamate--tRNA ligase (474 aa).

Residues 11–21 (PSPTGFLHIGG) carry the 'HIGH' region motif. Residues 240–244 (KLSKR) carry the 'KMSKS' region motif. K243 provides a ligand contact to ATP.

This sequence belongs to the class-I aminoacyl-tRNA synthetase family. Glutamate--tRNA ligase type 1 subfamily. As to quaternary structure, monomer.

The protein localises to the cytoplasm. The catalysed reaction is tRNA(Glu) + L-glutamate + ATP = L-glutamyl-tRNA(Glu) + AMP + diphosphate. Functionally, catalyzes the attachment of glutamate to tRNA(Glu) in a two-step reaction: glutamate is first activated by ATP to form Glu-AMP and then transferred to the acceptor end of tRNA(Glu). The sequence is that of Glutamate--tRNA ligase from Nitrobacter winogradskyi (strain ATCC 25391 / DSM 10237 / CIP 104748 / NCIMB 11846 / Nb-255).